Reading from the N-terminus, the 247-residue chain is 5'-nucleotidase SurE (247 aa).

A divalent metal cation is bound by residues Asp8, Asp9, Ser39, and Asn91.

The protein belongs to the SurE nucleotidase family. Requires a divalent metal cation as cofactor.

Its subcellular location is the cytoplasm. The catalysed reaction is a ribonucleoside 5'-phosphate + H2O = a ribonucleoside + phosphate. In terms of biological role, nucleotidase that shows phosphatase activity on nucleoside 5'-monophosphates. This Leptospira biflexa serovar Patoc (strain Patoc 1 / Ames) protein is 5'-nucleotidase SurE.